The sequence spans 433 residues: Oxaloacetate decarboxylase beta chain 2 (433 aa).

Transmembrane regions (helical) follow at residues 13–35 (LMHL…WLAI), 42–64 (LLLL…LALT), 125–147 (LFYK…VGAM), 160–182 (LLLG…TLNY), 214–236 (LAPE…VPLI), 266–288 (ILFP…PLLG), 308–327 (TVQN…SVGA), 339–361 (TLGI…VLMA), and 413–432 (VAGV…YVLA).

This sequence belongs to the GcdB/MmdB/OadB family. Heterotrimer of an alpha, a beta and a gamma subunit. Requires Na(+) as cofactor.

The protein resides in the cell membrane. The enzyme catalyses oxaloacetate + 2 Na(+)(in) + H(+) = pyruvate + 2 Na(+)(out) + CO2. Functionally, catalyzes the decarboxylation of oxaloacetate coupled to Na(+) translocation. This chain is Oxaloacetate decarboxylase beta chain 2 (oadB2), found in Salmonella typhimurium (strain LT2 / SGSC1412 / ATCC 700720).